The following is a 291-amino-acid chain: 4-hydroxybenzoate octaprenyltransferase (291 aa).

Transmembrane regions (helical) follow at residues 23-43, 47-67, 98-118, 139-159, 171-191, 216-236, 238-258, and 267-287; these read PIGTLLLLWPTLWAMWMAADG, PALVAIFVVGTVLMRSAGCAI, LAVAAVLALVAFTLILPLNAL, FFAIPQAYLGIAFGFGIPMAY, WLMLAANVLWAIAYDTAYAMV, IMLCYAGFFGIMAWVGHALAL, AAYWIGLAAAAALAGYYYTLL, and FFVFRHNNWFGACVFVGAALA.

This sequence belongs to the UbiA prenyltransferase family. The cofactor is Mg(2+).

It localises to the cell inner membrane. It carries out the reaction all-trans-octaprenyl diphosphate + 4-hydroxybenzoate = 4-hydroxy-3-(all-trans-octaprenyl)benzoate + diphosphate. Its pathway is cofactor biosynthesis; ubiquinone biosynthesis. In terms of biological role, catalyzes the prenylation of para-hydroxybenzoate (PHB) with an all-trans polyprenyl group. Mediates the second step in the final reaction sequence of ubiquinone-8 (UQ-8) biosynthesis, which is the condensation of the polyisoprenoid side chain with PHB, generating the first membrane-bound Q intermediate 3-octaprenyl-4-hydroxybenzoate. The polypeptide is 4-hydroxybenzoate octaprenyltransferase (Ralstonia nicotianae (strain ATCC BAA-1114 / GMI1000) (Ralstonia solanacearum)).